Here is a 2510-residue protein sequence, read N- to C-terminus: Highly reducing polyketide synthase g433 (2510 aa).

The interval 1 to 54 (MAPGRTDVTVAENGNGLHTAHNGVSNGTSNGTNGTSHTSNGTNSSAKTTSNGVH) is disordered. Low complexity predominate over residues 22–45 (NGVSNGTSNGTNGTSHTSNGTNSS). A Ketosynthase family 3 (KS3) domain is found at 58–477 (DIPIAIVGMG…GANAHAVIDS (420 aa)). Catalysis depends on for beta-ketoacyl synthase activity residues Cys229, His365, and His400. Residues 574–880 (FVFTGQGAQW…VPTLVRGQND (307 aa)) form a malonyl-CoA:ACP transacylase (MAT) domain region. The interval 942–1070 (HDLLGCQVFE…GQVKAGRADS (129 aa)) is N-terminal hotdog fold. Positions 942–1226 (HDLLGCQVFE…NLRLAPAADD (285 aa)) are dehydratase (DH) domain. The 288-residue stretch at 942–1229 (HDLLGCQVFE…LAPAADDTGG (288 aa)) folds into the PKS/mFAS DH domain. His974 serves as the catalytic Proton acceptor; for dehydratase activity. Residues 1083 to 1229 (PRKVSSTRWY…LAPAADDTGG (147 aa)) are C-terminal hotdog fold. Catalysis depends on Asp1144, which acts as the Proton donor; for dehydratase activity. The tract at residues 1395 to 1574 (DFLGLVSHDK…FDGAEAVIYD (180 aa)) is methyltransferase (CMet) domain. Residues 1787 to 2097 (GSLKTLRWVQ…KGQHMGKLVI (311 aa)) are enoyl reductase (ER) (ER) domain. The tract at residues 2122–2296 (SYLLVGGLGG…ASVLDISIIE (175 aa)) is ketoreductase (KR) domain. Residues 2419-2496 (SSVSFLANEI…KLGEAAAEGL (78 aa)) enclose the Carrier domain. Ser2456 is modified (O-(pantetheine 4'-phosphoryl)serine).

The protein operates within mycotoxin biosynthesis. Functionally, highly reducing polyketide synthase; part of the gene cluster that mediates the biosynthesis of 1233A, a natural compound known as an inhibitor of HMG-CoA synthase in the mevalonate pathway and with antibacterial and antifungal activities. The highly reducing polyketide synthase g433 gene is responsible for the 1233A backbone biosynthesis and the cytochrome P450 monooxygenase g430 catalyzes oxidation of the backbone. This Fusarium sp protein is Highly reducing polyketide synthase g433.